The chain runs to 242 residues: tRNA (guanine-N(1)-)-methyltransferase (242 aa).

S-adenosyl-L-methionine-binding positions include G108 and 127–132; that span reads IGDYVL.

Belongs to the RNA methyltransferase TrmD family. As to quaternary structure, homodimer.

It is found in the cytoplasm. It carries out the reaction guanosine(37) in tRNA + S-adenosyl-L-methionine = N(1)-methylguanosine(37) in tRNA + S-adenosyl-L-homocysteine + H(+). In terms of biological role, specifically methylates guanosine-37 in various tRNAs. In Lactobacillus acidophilus (strain ATCC 700396 / NCK56 / N2 / NCFM), this protein is tRNA (guanine-N(1)-)-methyltransferase.